Here is a 517-residue protein sequence, read N- to C-terminus: Ammonium transporter 3 (517 aa).

Residues 1 to 32 (MLNEPNALLRRDANSTIATVTELFPNEYSNAD) lie on the Extracellular side of the membrane. The chain crosses the membrane as a helical span at residues 33–53 (IAYVLLSTVVVFTVTPGIALY). Over 54-69 (YAGMVRKNSALSILTQ) the chain is Cytoplasmic. A helical membrane pass occupies residues 70–90 (SFLVTAVVFIQWYLFGYSLAC). Over 91–118 (SSGSSFYGTLWQGGMNHLWLEPYIPGST) the chain is Extracellular. The chain crosses the membrane as a helical span at residues 119–139 (IPAIVYFPFGGLFAVATAQLF). Over 140–148 (AGAMAERGR) the chain is Cytoplasmic. Residues 149 to 169 (LIPSLVISFLYITLVYCPQAY) traverse the membrane as a helical segment. The Extracellular segment spans residues 170-180 (WTWAPNGWLYT). A helical membrane pass occupies residues 181–201 (LGALDFAGGGPVHISSGFAAL). Topologically, residues 202 to 272 (AYSLCLGRRI…AHNPPHDAGM (71 aa)) are cytoplasmic. Residues 273-293 (VYIGVVLIWFAWLCFNSGTLL) traverse the membrane as a helical segment. Over 294-299 (TVNIRT) the chain is Extracellular. The helical transmembrane segment at 300-320 (AYIMTNTLISSSFGALTWAII) threads the bilayer. Residues 321 to 327 (DYIRYRK) lie on the Cytoplasmic side of the membrane. The helical transmembrane segment at 328–348 (FSTIGICEGAIAGLVGITPAC) threads the bilayer. A topological domain (extracellular) is located at residue glycine 349. A helical membrane pass occupies residues 350-370 (FVFPWGAAAGGIVPALVCNFL). Topologically, residues 371–384 (HDLNEWIGVDETLR) are cytoplasmic. The chain crosses the membrane as a helical span at residues 385–405 (VFNLHGIGGIVGSIVLGVVAH). At 406–432 (PDVAASDGATVIDGGWAVHHWKQMGYQ) the chain is on the extracellular side. The helical transmembrane segment at 433-453 (FAGFTSVAAWSFVITAIICLL) threads the bilayer. Topologically, residues 454-517 (VDLVPGLHIR…NIKQEKQDEF (64 aa)) are cytoplasmic.

This sequence belongs to the ammonia transporter channel (TC 1.A.11.2) family.

The protein resides in the membrane. Its function is as follows. Transporter for ammonium to use as a nitrogen source. In Schizosaccharomyces pombe (strain 972 / ATCC 24843) (Fission yeast), this protein is Ammonium transporter 3 (amt3).